Here is a 214-residue protein sequence, read N- to C-terminus: Octanoyltransferase (214 aa).

Positions 28–210 (GTAEDALYLL…EFGKVFTDTA (183 aa)) constitute a BPL/LPL catalytic domain. Substrate is bound by residues 73–80 (RGGNITCH), 140–142 (SIG), and 153–155 (GLS). Catalysis depends on Cys-171, which acts as the Acyl-thioester intermediate.

Belongs to the LipB family.

It localises to the cytoplasm. The enzyme catalyses octanoyl-[ACP] + L-lysyl-[protein] = N(6)-octanoyl-L-lysyl-[protein] + holo-[ACP] + H(+). It functions in the pathway protein modification; protein lipoylation via endogenous pathway; protein N(6)-(lipoyl)lysine from octanoyl-[acyl-carrier-protein]: step 1/2. In terms of biological role, catalyzes the transfer of endogenously produced octanoic acid from octanoyl-acyl-carrier-protein onto the lipoyl domains of lipoate-dependent enzymes. Lipoyl-ACP can also act as a substrate although octanoyl-ACP is likely to be the physiological substrate. The protein is Octanoyltransferase of Maridesulfovibrio salexigens (strain ATCC 14822 / DSM 2638 / NCIMB 8403 / VKM B-1763) (Desulfovibrio salexigens).